A 386-amino-acid polypeptide reads, in one-letter code: Putative 8-amino-7-oxononanoate synthase (386 aa).

Arginine 22 provides a ligand contact to substrate. Residue 109-110 participates in pyridoxal 5'-phosphate binding; that stretch reads GY. Histidine 134 is a substrate binding site. Pyridoxal 5'-phosphate is bound by residues serine 182, 207-210, and 238-241; these read DEAH and TLSK. Lysine 241 is subject to N6-(pyridoxal phosphate)lysine. Threonine 356 is a substrate binding site.

Belongs to the class-II pyridoxal-phosphate-dependent aminotransferase family. BioF subfamily. In terms of assembly, homodimer. Pyridoxal 5'-phosphate serves as cofactor.

The enzyme catalyses 6-carboxyhexanoyl-[ACP] + L-alanine + H(+) = (8S)-8-amino-7-oxononanoate + holo-[ACP] + CO2. It functions in the pathway cofactor biosynthesis; biotin biosynthesis. In terms of biological role, catalyzes the decarboxylative condensation of pimeloyl-[acyl-carrier protein] and L-alanine to produce 8-amino-7-oxononanoate (AON), [acyl-carrier protein], and carbon dioxide. In Nostoc sp. (strain PCC 7120 / SAG 25.82 / UTEX 2576), this protein is Putative 8-amino-7-oxononanoate synthase (bioF).